The sequence spans 154 residues: Large ribosomal subunit protein uL15 (154 aa).

Residues 1–57 (MRFQDLHPQAGSRRRKRRIGRGIAAGQGASGGFGMRGQKSRSGRPTRPGFEGGQNPL) are disordered. A compositionally biased stretch (gly residues) spans 23-35 (IAAGQGASGGFGM).

The protein belongs to the universal ribosomal protein uL15 family. As to quaternary structure, part of the 50S ribosomal subunit.

Its function is as follows. Binds to the 23S rRNA. The sequence is that of Large ribosomal subunit protein uL15 from Thermosynechococcus vestitus (strain NIES-2133 / IAM M-273 / BP-1).